Consider the following 149-residue polypeptide: Large ribosomal subunit protein bL9 (149 aa).

Belongs to the bacterial ribosomal protein bL9 family.

Its function is as follows. Binds to the 23S rRNA. The sequence is that of Large ribosomal subunit protein bL9 from Clostridioides difficile (strain 630) (Peptoclostridium difficile).